Here is a 397-residue protein sequence, read N- to C-terminus: Phosphoglycerate kinase (397 aa).

Substrate contacts are provided by residues 21 to 23 (DFN), Arg-37, 60 to 63 (HLGR), Arg-120, and Arg-153. ATP-binding positions include Lys-206, Gly-296, Glu-327, and 353 to 356 (GGDS).

This sequence belongs to the phosphoglycerate kinase family. As to quaternary structure, monomer.

It localises to the cytoplasm. The catalysed reaction is (2R)-3-phosphoglycerate + ATP = (2R)-3-phospho-glyceroyl phosphate + ADP. The protein operates within carbohydrate degradation; glycolysis; pyruvate from D-glyceraldehyde 3-phosphate: step 2/5. The polypeptide is Phosphoglycerate kinase (Rhodopirellula baltica (strain DSM 10527 / NCIMB 13988 / SH1)).